The following is a 256-amino-acid chain: Cytoplasmic envelopment protein 1 (256 aa).

The protein belongs to the herpesviridae cytoplasmic envelopment protein 1 family.

The protein resides in the virion. Its subcellular location is the virion tegument. It is found in the host cytoplasm. It localises to the host Golgi apparatus. In terms of biological role, plays a critical role in cytoplasmic virus egress. Participates in the final step of tegumentation and envelope acquisition within the host cytoplasm. The protein is Cytoplasmic envelopment protein 1 (U75) of Homo sapiens (Human).